The primary structure comprises 159 residues: Regulatory protein RecX (159 aa).

Belongs to the RecX family.

The protein localises to the cytoplasm. Its function is as follows. Modulates RecA activity. This is Regulatory protein RecX from Acinetobacter baylyi (strain ATCC 33305 / BD413 / ADP1).